Here is a 1132-residue protein sequence, read N- to C-terminus: Phospholipid-transporting ATPase IG (1132 aa).

Over 1–66 (MQMVPSLPPA…NFLPKNLFEQ (66 aa)) the chain is Cytoplasmic. A helical membrane pass occupies residues 67 to 85 (FRRIANFYFLIIFLVQVTV). Residue Asp-86 is a topological domain, extracellular. Residues 87-107 (TPTSPVTSGLPLFFVITVTAI) traverse the membrane as a helical segment. The Cytoplasmic portion of the chain corresponds to 108-290 (KQGYEDCLRH…SQKRSAVEKS (183 aa)). The helical transmembrane segment at 291 to 311 (INAFLIVYLFILLTKAAVCTT) threads the bilayer. The Extracellular segment spans residues 312–346 (LKYVWQSTPYNDEPWYNQKTQKERETLKVLKMFTD). Residues 347 to 367 (FLSFMVLFNFIIPVSMYVTVE) form a helical membrane-spanning segment. Residues 368-879 (MQKFLGSFFI…YVRIAHLVQY (512 aa)) are Cytoplasmic-facing. Asp-412 (4-aspartylphosphate intermediate) is an active-site residue. Positions 412, 413, and 414 each coordinate ATP. Asp-412 provides a ligand contact to Mg(2+). Residue Thr-414 coordinates Mg(2+). The residue at position 445 (Ser-445) is a Phosphoserine. The ATP site is built by Glu-501, Phe-543, Lys-566, Arg-597, Thr-677, Gly-678, Asp-679, Arg-792, and Lys-798. Asp-819 is a binding site for Mg(2+). Residues Asn-822 and Asp-823 each contribute to the ATP site. Asp-823 serves as a coordination point for Mg(2+). Residues 880–900 (FFYKNLCFILPQFLYQFFCGF) traverse the membrane as a helical segment. Topologically, residues 901-908 (SQQPLYDA) are extracellular. The chain crosses the membrane as a helical span at residues 909–929 (AYLTMYNICFTSLPILAYSLL). Over 930 to 955 (EQHINIDTLTSDPRLYMKISGNAMLQ) the chain is Cytoplasmic. A helical membrane pass occupies residues 956–976 (LGPFLYWTFLAAFEGTVFFFG). The Extracellular portion of the chain corresponds to 977–995 (TYFLFQTASLEENGKVYGN). A helical membrane pass occupies residues 996–1016 (WTFGTIVFTVLVFTVTLKLAL). At 1017–1026 (DTRFWTWINH) the chain is on the cytoplasmic side. A helical transmembrane segment spans residues 1027–1047 (FVIWGSLAFYVFFSFFWGGII). The Extracellular segment spans residues 1048-1069 (WPFLKQQRMYFVFAQMLSSVST). Residues 1070–1090 (WLAIILLIFISLFPEILLIVL) traverse the membrane as a helical segment. Over 1091–1132 (KNVRRRSARRNLSCRRASDSLSARPSVRPLLLRTFSDESNVL) the chain is Cytoplasmic. Phosphoserine is present on residues Ser-1108, Ser-1116, and Ser-1126. Positions 1116-1121 (SVRPLL) match the Di-leucine motif motif.

It belongs to the cation transport ATPase (P-type) (TC 3.A.3) family. Type IV subfamily. As to quaternary structure, component of a P4-ATPase flippase complex which consists of a catalytic alpha subunit ATP11C and an accessory beta subunit TMEM30A. The cofactor is Mg(2+). Proteolytically cleaved by CASP3, CASP6 and CASP7. In terms of processing, phosphorylated at Ser-1116 likely by PRKCA; this creates a functional di-leucine motif that is sufficient for endocytosis. Widely expressed.

Its subcellular location is the cell membrane. The protein resides in the endoplasmic reticulum membrane. It localises to the early endosome membrane. The protein localises to the recycling endosome membrane. It catalyses the reaction ATP + H2O + phospholipidSide 1 = ADP + phosphate + phospholipidSide 2.. It carries out the reaction a 1,2-diacyl-sn-glycero-3-phospho-L-serine(out) + ATP + H2O = a 1,2-diacyl-sn-glycero-3-phospho-L-serine(in) + ADP + phosphate + H(+). The enzyme catalyses a 1,2-diacyl-sn-glycero-3-phosphoethanolamine(out) + ATP + H2O = a 1,2-diacyl-sn-glycero-3-phosphoethanolamine(in) + ADP + phosphate + H(+). The flippase activity is inactivated by caspase-mediated cleavage in apoptotic cells, allowing for PS exposure on the cell surface and engulfment of apoptotic cells by macrophages. The ATPase activity is up-regulated by aminophospholipids PS and PE and down-regulated by Increasing intracellular Ca2+ levels. In terms of biological role, catalytic component of a P4-ATPase flippase complex which catalyzes the hydrolysis of ATP coupled to the transport of aminophospholipids, phosphatidylserines (PS) and phosphatidylethanolamines (PE), from the outer to the inner leaflet of the plasma membrane. Major PS-flippase in immune cell subsets. In erythrocyte plasma membrane, it is required to maintain PS in the inner leaflet preventing its exposure on the surface. This asymmetric distribution is critical for the survival of erythrocytes in circulation since externalized PS is a phagocytic signal for erythrocyte clearance by splenic macrophages. Required for B cell differentiation past the pro-B cell stage. Seems to mediate PS flipping in pro-B cells. May be involved in the transport of cholestatic bile acids. In Homo sapiens (Human), this protein is Phospholipid-transporting ATPase IG.